A 1059-amino-acid polypeptide reads, in one-letter code: Translation initiation factor IF-2 (1059 aa).

2 stretches are compositionally biased toward polar residues: residues 55–75 and 107–126; these read LPHS…NQDS and KINN…NNQV. Disordered regions lie at residues 55-81, 93-394, and 418-468; these read LPHS…GYNE, PKPL…RLRL, and SLSL…QSAE. Positions 178–187 are enriched in basic and acidic residues; that stretch reads DSNEKSKVEV. Residues 202 to 211 show a composition bias toward polar residues; it reads LNRNLRNTGV. Basic residues predominate over residues 216–229; it reads QKNKKPKQEGKKRK. 2 stretches are compositionally biased toward basic and acidic residues: residues 230–252 and 259–273; these read DKEE…DTSI and SKKE…RESV. Residues 274–284 show a composition bias toward polar residues; it reads KTSASDTSSQL. Composition is skewed to basic and acidic residues over residues 291–300 and 359–368; these read KPTVKLKQEQ and LTKDKKVSKW. The segment covering 452–463 has biased composition (low complexity); that stretch reads SHESVQSESNEQ. In terms of domain architecture, tr-type G spans 556 to 733; the sequence is RRPPVVTIMG…EVEDLQANPE (178 aa). Positions 565–572 are G1; it reads GHVDHGKT. 565–572 is a binding site for GTP; sequence GHVDHGKT. Residues 590 to 594 are G2; that stretch reads GITQH. Positions 615–618 are G3; that stretch reads DTPG. GTP is bound by residues 615–619 and 669–672; these read DTPGH and NKID. The tract at residues 669–672 is G4; that stretch reads NKID. Residues 705-707 form a G5 region; the sequence is SAI.

It belongs to the TRAFAC class translation factor GTPase superfamily. Classic translation factor GTPase family. IF-2 subfamily.

The protein localises to the cytoplasm. In terms of biological role, one of the essential components for the initiation of protein synthesis. Protects formylmethionyl-tRNA from spontaneous hydrolysis and promotes its binding to the 30S ribosomal subunits. Also involved in the hydrolysis of GTP during the formation of the 70S ribosomal complex. The chain is Translation initiation factor IF-2 from Trichodesmium erythraeum (strain IMS101).